A 214-amino-acid polypeptide reads, in one-letter code: Ras-related protein Rab-11A (214 aa).

GTP is bound by residues 20–28, 39–45, 68–72, 126–129, and 156–158; these read GDSGVGKSN, SLETKST, DTAGQ, NKSD, and SAL. The Effector region signature appears at 42-50; that stretch reads TKSTIGVEF. S-geranylgeranyl cysteine attachment occurs at residues cysteine 213 and cysteine 214.

It belongs to the small GTPase superfamily. Rab family.

It is found in the contractile vacuole membrane. Its function is as follows. Required for normal contractile vacuole structure and function. Cells expressing a dominant negative rab11A exhibit a more extensive contractile vacuole network and enlarged contractile vacuole bladders. These cells exhibit a functional defect in osmotic regulation where cells immersed in water become rounded and detach from the surface, and contain swollen contractile vacuoles. In Dictyostelium discoideum (Social amoeba), this protein is Ras-related protein Rab-11A (rab11A).